The following is a 534-amino-acid chain: Prolyl 4-hydroxylase subunit alpha-1 (534 aa).

An N-terminal signal peptide occupies residues 1 to 17 (MIWYILIIGILLPQSLA). Asn-113 carries an N-linked (GlcNAc...) asparagine glycan. Residues 205–238 (VSVLDYLSYAVYQQGDLDKALLLTKKLLELDPEH) form a TPR repeat. The N-linked (GlcNAc...) asparagine glycan is linked to Asn-259. The Fe2OG dioxygenase domain occupies 411 to 519 (TAEELQVANY…KWVSNKWLHE (109 aa)). Fe cation contacts are provided by His-429, Asp-431, and His-500. 2-oxoglutarate is bound at residue Lys-510.

This sequence belongs to the P4HA family. As to quaternary structure, heterotetramer of two alpha-1 chains and two beta chains (P4HB)(the beta chain is the multi-functional PDI), where P4HB plays the role of a structural subunit; this tetramer catalyzes the formation of 4-hydroxyproline in collagen. Requires Fe(2+) as cofactor. The cofactor is L-ascorbate. As to expression, expressed in the heart, liver, skeletal muscle, kidney, placenta, lung and pancreas.

It localises to the endoplasmic reticulum lumen. The enzyme catalyses L-prolyl-[collagen] + 2-oxoglutarate + O2 = trans-4-hydroxy-L-prolyl-[collagen] + succinate + CO2. With respect to regulation, inhibited by poly(L-proline). Its function is as follows. Catalyzes the post-translational formation of 4-hydroxyproline in -Xaa-Pro-Gly- sequences in collagens and other proteins. This is Prolyl 4-hydroxylase subunit alpha-1 (P4HA1) from Homo sapiens (Human).